Reading from the N-terminus, the 500-residue chain is Histidine--tRNA ligase (500 aa).

It belongs to the class-II aminoacyl-tRNA synthetase family. Homodimer.

It localises to the cytoplasm. It catalyses the reaction tRNA(His) + L-histidine + ATP = L-histidyl-tRNA(His) + AMP + diphosphate + H(+). This is Histidine--tRNA ligase from Ruegeria sp. (strain TM1040) (Silicibacter sp.).